Here is a 190-residue protein sequence, read N- to C-terminus: MAKLRDYYKSHVVYDLMREFKYKSVMQVPKINKITISMGVGKSIINKKFLERAIEDLEMISGQKPVITKARKSIASFKIRQGQEIGCKVTLRRKRMWEFFERLISIAIPRIRDFRGLSIKSFDGYGNYTMGIREQIIFPEINYDTIDGIRGMNITITTNAVSDKEAYVLLRAFRFPLKNNDSIYTSTEEH.

Belongs to the universal ribosomal protein uL5 family. As to quaternary structure, part of the 50S ribosomal subunit; part of the 5S rRNA/L5/L18/L25 subcomplex. Contacts the 5S rRNA and the P site tRNA. Forms a bridge to the 30S subunit in the 70S ribosome.

Its function is as follows. This is one of the proteins that bind and probably mediate the attachment of the 5S RNA into the large ribosomal subunit, where it forms part of the central protuberance. In the 70S ribosome it contacts protein S13 of the 30S subunit (bridge B1b), connecting the 2 subunits; this bridge is implicated in subunit movement. Contacts the P site tRNA; the 5S rRNA and some of its associated proteins might help stabilize positioning of ribosome-bound tRNAs. The sequence is that of Large ribosomal subunit protein uL5 from Blochmanniella floridana.